The primary structure comprises 657 residues: Translation factor GUF1, mitochondrial (657 aa).

Residues 1–39 (MRGCLQSVKWLTSALRPSQSLASSTRYPRRLLSTSAPRN) constitute a mitochondrion transit peptide. The tr-type G domain occupies 59–239 (ERFRNFCIVA…TVIEQIPAPV (181 aa)). Residues 121-128 (HQGEDYLL), 185-189 (INKVD), and 239-242 (VGDR) contribute to the GTP site.

This sequence belongs to the TRAFAC class translation factor GTPase superfamily. Classic translation factor GTPase family. LepA subfamily.

The protein localises to the mitochondrion inner membrane. The catalysed reaction is GTP + H2O = GDP + phosphate + H(+). Its function is as follows. Promotes mitochondrial protein synthesis. May act as a fidelity factor of the translation reaction, by catalyzing a one-codon backward translocation of tRNAs on improperly translocated ribosomes. Binds to mitochondrial ribosomes in a GTP-dependent manner. The chain is Translation factor GUF1, mitochondrial from Ajellomyces capsulatus (strain H143) (Darling's disease fungus).